Here is a 532-residue protein sequence, read N- to C-terminus: CTP synthase (532 aa).

Residues 1–267 (MAKFIFVTGG…QDIIIEQLQL (267 aa)) are amidoligase domain. Serine 13 serves as a coordination point for CTP. Serine 13 provides a ligand contact to UTP. An ATP-binding site is contributed by 14–19 (GLGKGI). Tyrosine 54 contacts L-glutamine. ATP is bound at residue aspartate 71. Positions 71 and 141 each coordinate Mg(2+). Residues 148 to 150 (DIE), 188 to 193 (KTKPIQ), and lysine 224 each bind CTP. UTP is bound by residues 188–193 (KTKPIQ) and lysine 224. The Glutamine amidotransferase type-1 domain maps to 292 to 532 (EISFVGKYIE…FIKAIIENNK (241 aa)). Glycine 354 is an L-glutamine binding site. Residue cysteine 381 is the Nucleophile; for glutamine hydrolysis of the active site. Residues 382–385 (LGMQ), glutamate 405, and arginine 461 contribute to the L-glutamine site. Residues histidine 506 and glutamate 508 contribute to the active site.

This sequence belongs to the CTP synthase family. As to quaternary structure, homotetramer.

The catalysed reaction is UTP + L-glutamine + ATP + H2O = CTP + L-glutamate + ADP + phosphate + 2 H(+). It catalyses the reaction L-glutamine + H2O = L-glutamate + NH4(+). The enzyme catalyses UTP + NH4(+) + ATP = CTP + ADP + phosphate + 2 H(+). It participates in pyrimidine metabolism; CTP biosynthesis via de novo pathway; CTP from UDP: step 2/2. With respect to regulation, allosterically activated by GTP, when glutamine is the substrate; GTP has no effect on the reaction when ammonia is the substrate. The allosteric effector GTP functions by stabilizing the protein conformation that binds the tetrahedral intermediate(s) formed during glutamine hydrolysis. Inhibited by the product CTP, via allosteric rather than competitive inhibition. Its function is as follows. Catalyzes the ATP-dependent amination of UTP to CTP with either L-glutamine or ammonia as the source of nitrogen. Regulates intracellular CTP levels through interactions with the four ribonucleotide triphosphates. The chain is CTP synthase from Mycoplasma capricolum subsp. capricolum (strain California kid / ATCC 27343 / NCTC 10154).